The following is a 496-amino-acid chain: Beta-N-acetylhexosaminidase (496 aa).

The Proton donor role is filled by E298.

It belongs to the glycosyl hydrolase 20 family.

The catalysed reaction is Hydrolysis of terminal non-reducing N-acetyl-D-hexosamine residues in N-acetyl-beta-D-hexosaminides.. Its pathway is glycan degradation; chitin degradation. Catalyzes the cleavage of beta-N-acetylglucosaminides and beta-N-acetylgalactosaminides. Also catalyzes the hydrolysis of N-acetylchitooligomers. May be involved in chitin degradation. It is not able to cleave beta-glucosides. The chain is Beta-N-acetylhexosaminidase (hex20) from Cellulomonas fimi.